Here is a 340-residue protein sequence, read N- to C-terminus: Probable protein phosphatase 2C 21 (340 aa).

A disordered region spans residues 1–21 (MGASPSRPLEQSPSSSEGENH). Positions 24–305 (KYASYTTQGF…DNATAILVKF (282 aa)) constitute a PPM-type phosphatase domain. Mn(2+)-binding residues include D58, G59, D254, and D296. The tract at residues 311-340 (DPDEVASARDEHQHNPEGGDEKLDINNDND) is disordered. The segment covering 316 to 340 (ASARDEHQHNPEGGDEKLDINNDND) has biased composition (basic and acidic residues).

The protein belongs to the PP2C family. The cofactor is Mg(2+). Requires Mn(2+) as cofactor.

It carries out the reaction O-phospho-L-seryl-[protein] + H2O = L-seryl-[protein] + phosphate. The catalysed reaction is O-phospho-L-threonyl-[protein] + H2O = L-threonyl-[protein] + phosphate. This chain is Probable protein phosphatase 2C 21, found in Oryza sativa subsp. japonica (Rice).